A 299-amino-acid polypeptide reads, in one-letter code: Heterodisulfide reductase subunit B-like protein (299 aa).

It belongs to the HdrB family. The heterodisulfide reductase is composed of three subunits; HdlA, HdlB and HdlC. It forms a complex with the F420-non-reducing hydrogenase (Mvh), which provides the reducing equivalents to the heterodisulfide reductase.

Its subcellular location is the cytoplasm. In terms of biological role, has oxidoreductase activity. The Hdl and Mvh subunits may together mediate electron transfer from hydrogen to an unidentified electron acceptor on the cytoplasmic side of the membrane. The protein is Heterodisulfide reductase subunit B-like protein (hdlB) of Archaeoglobus profundus (strain DSM 5631 / JCM 9629 / NBRC 100127 / Av18).